A 235-amino-acid chain; its full sequence is Claudin-16 (235 aa).

Topologically, residues 1–3 (MRD) are cytoplasmic. The chain crosses the membrane as a helical span at residues 4-24 (LLQYIACFFAFFSAGFLIVAT). The Extracellular segment spans residues 25–79 (WTDCWMVNADDSLEVSTKCRGLWWECVTNAFDGIRTCDEYDSILAEHPLKLVVTR). A helical transmembrane segment spans residues 80 to 100 (ALMITADILAGFGFLTLLLGL). The Cytoplasmic segment spans residues 101-115 (DCVKFLPDEPYIKVR). A helical membrane pass occupies residues 116–136 (ICFVAGATLLIAGTPGIIGSV). Residues 137–169 (WYAVDVYVERSTLVLHNIFLGIQYKFGWSCWLG) lie on the Extracellular side of the membrane. Residues 170–190 (MAGSLGCFLAGAVLTCCLYLF) form a helical membrane-spanning segment. Residues 191-235 (KDVGPERNYPYSLRKAYSAAGVSMAKSYSAPRTETAKMYAVDTRV) lie on the Cytoplasmic side of the membrane. The short motif at 233–235 (TRV) is the Interaction with TJP1 element.

The protein belongs to the claudin family. Can form heteropolymeric tight junction strands with other claudins. Interacts with CLDN19. Interacts (via PDZ-binding motif TRV) with TJP1 (via PDZ domain). Cannot form tight junction strands on its own. Kidney-specific, including the thick ascending limb of Henle (TAL).

Its subcellular location is the cell junction. The protein resides in the tight junction. It is found in the cell membrane. The enzyme catalyses Mg(2+)(in) = Mg(2+)(out). It carries out the reaction Ca(2+)(in) = Ca(2+)(out). It catalyses the reaction Na(+)(in) = Na(+)(out). The catalysed reaction is K(+)(in) = K(+)(out). The enzyme catalyses Rb(+)(in) = Rb(+)(out). It carries out the reaction Cs(+)(in) = Cs(+)(out). It catalyses the reaction Li(+)(in) = Li(+)(out). Forms paracellular channels: coassembles with CLDN19 into tight junction strands with cation-selective channels through the strands, conveying epithelial permeability in a process known as paracellular tight junction permeability. Involved in the maintenance of ion gradients along the nephron. In the thick ascending limb (TAL) of Henle's loop, facilitates sodium paracellular permeability from the interstitial compartment to the lumen, contributing to the lumen-positive transepithelial potential that drives paracellular magnesium and calcium reabsorption. This chain is Claudin-16, found in Homo sapiens (Human).